The following is a 270-amino-acid chain: Regulatory protein RecX (270 aa).

This sequence belongs to the RecX family.

The protein localises to the cytoplasm. Its function is as follows. Modulates RecA activity. The polypeptide is Regulatory protein RecX (Bacillus cereus (strain 03BB102)).